Reading from the N-terminus, the 150-residue chain is Regulatory protein RecX (150 aa).

Belongs to the RecX family.

It is found in the cytoplasm. Modulates RecA activity. The sequence is that of Regulatory protein RecX from Legionella pneumophila (strain Corby).